We begin with the raw amino-acid sequence, 247 residues long: tRNA (guanine-N(1)-)-methyltransferase (247 aa).

Residues Gly-113 and 133–138 (IGDFVM) each bind S-adenosyl-L-methionine.

It belongs to the RNA methyltransferase TrmD family. Homodimer.

The protein localises to the cytoplasm. The enzyme catalyses guanosine(37) in tRNA + S-adenosyl-L-methionine = N(1)-methylguanosine(37) in tRNA + S-adenosyl-L-homocysteine + H(+). Its function is as follows. Specifically methylates guanosine-37 in various tRNAs. The protein is tRNA (guanine-N(1)-)-methyltransferase of Vibrio cholerae serotype O1 (strain ATCC 39541 / Classical Ogawa 395 / O395).